We begin with the raw amino-acid sequence, 415 residues long: Serine hydroxymethyltransferase (415 aa).

(6S)-5,6,7,8-tetrahydrofolate is bound by residues Leu117 and 121–123 (GHL). Lys226 is subject to N6-(pyridoxal phosphate)lysine. Glu241 is a (6S)-5,6,7,8-tetrahydrofolate binding site.

The protein belongs to the SHMT family. In terms of assembly, homodimer. Pyridoxal 5'-phosphate is required as a cofactor.

The protein localises to the cytoplasm. It catalyses the reaction (6R)-5,10-methylene-5,6,7,8-tetrahydrofolate + glycine + H2O = (6S)-5,6,7,8-tetrahydrofolate + L-serine. It participates in one-carbon metabolism; tetrahydrofolate interconversion. The protein operates within amino-acid biosynthesis; glycine biosynthesis; glycine from L-serine: step 1/1. Its function is as follows. Catalyzes the reversible interconversion of serine and glycine with tetrahydrofolate (THF) serving as the one-carbon carrier. This reaction serves as the major source of one-carbon groups required for the biosynthesis of purines, thymidylate, methionine, and other important biomolecules. Also exhibits THF-independent aldolase activity toward beta-hydroxyamino acids, producing glycine and aldehydes, via a retro-aldol mechanism. This Bacillus velezensis (strain DSM 23117 / BGSC 10A6 / LMG 26770 / FZB42) (Bacillus amyloliquefaciens subsp. plantarum) protein is Serine hydroxymethyltransferase.